The sequence spans 225 residues: MKQIQIAIDGPASSGKSTVAKIIAKDFGYTYLDTGAMYRAATYLALRHHLTEEDATEIVDLLNNHSVSFGRAEDGEQLVFVGDVDVTHPIRENEVTNNVSWVSAIPQVREKLVALQQQIAAQGGIVMDGRDIGTVVLPQAELKIYLVASVEERAERRYKENLSKGIPADLEKLKEEIAERDYKDSHREVSPLRPADDAIHFDTTGIGISEVVAFIEEKAKKIIDK.

Glycine 10 to threonine 18 contacts ATP.

This sequence belongs to the cytidylate kinase family. Type 1 subfamily.

The protein localises to the cytoplasm. The enzyme catalyses CMP + ATP = CDP + ADP. The catalysed reaction is dCMP + ATP = dCDP + ADP. This is Cytidylate kinase from Streptococcus sanguinis (strain SK36).